Consider the following 636-residue polypeptide: Biosynthetic arginine decarboxylase (636 aa).

Residue lysine 110 is modified to N6-(pyridoxal phosphate)lysine. 290–300 is a substrate binding site; it reads IDVGGGLGVDY.

It belongs to the Orn/Lys/Arg decarboxylase class-II family. SpeA subfamily. The cofactor is Mg(2+). Pyridoxal 5'-phosphate serves as cofactor.

It catalyses the reaction L-arginine + H(+) = agmatine + CO2. In terms of biological role, catalyzes the biosynthesis of agmatine from arginine. This is Biosynthetic arginine decarboxylase from Pseudomonas aeruginosa (strain ATCC 15692 / DSM 22644 / CIP 104116 / JCM 14847 / LMG 12228 / 1C / PRS 101 / PAO1).